A 434-amino-acid chain; its full sequence is ATP phosphoribosyltransferase regulatory subunit (434 aa).

The tract at residues 1 to 48 is disordered; sequence MYGRGSGAEHSRGSGAEHFWDPRPEASSTVSSSLRPPSGARDLLPREV. Residues 27–38 are compositionally biased toward low complexity; that stretch reads SSTVSSSLRPPS.

This sequence belongs to the class-II aminoacyl-tRNA synthetase family. HisZ subfamily. As to quaternary structure, heteromultimer composed of HisG and HisZ subunits.

Its subcellular location is the cytoplasm. Its pathway is amino-acid biosynthesis; L-histidine biosynthesis; L-histidine from 5-phospho-alpha-D-ribose 1-diphosphate: step 1/9. Its function is as follows. Required for the first step of histidine biosynthesis. May allow the feedback regulation of ATP phosphoribosyltransferase activity by histidine. The protein is ATP phosphoribosyltransferase regulatory subunit of Synechococcus sp. (strain JA-2-3B'a(2-13)) (Cyanobacteria bacterium Yellowstone B-Prime).